The following is a 384-amino-acid chain: S-adenosylmethionine synthase (384 aa).

Histidine 16 contacts ATP. Aspartate 18 lines the Mg(2+) pocket. Residue glutamate 44 participates in K(+) binding. Residues glutamate 57 and glutamine 100 each coordinate L-methionine. A flexible loop region spans residues 100–110 (QSADIAMGVDE). ATP is bound by residues 165–167 (DAK), aspartate 240, 246–247 (RK), alanine 263, and lysine 267. Aspartate 240 contributes to the L-methionine binding site. Lysine 271 provides a ligand contact to L-methionine.

The protein belongs to the AdoMet synthase family. Homotetramer; dimer of dimers. It depends on Mg(2+) as a cofactor. K(+) serves as cofactor.

It is found in the cytoplasm. It catalyses the reaction L-methionine + ATP + H2O = S-adenosyl-L-methionine + phosphate + diphosphate. Its pathway is amino-acid biosynthesis; S-adenosyl-L-methionine biosynthesis; S-adenosyl-L-methionine from L-methionine: step 1/1. Functionally, catalyzes the formation of S-adenosylmethionine (AdoMet) from methionine and ATP. The overall synthetic reaction is composed of two sequential steps, AdoMet formation and the subsequent tripolyphosphate hydrolysis which occurs prior to release of AdoMet from the enzyme. The sequence is that of S-adenosylmethionine synthase from Teredinibacter turnerae (strain ATCC 39867 / T7901).